The chain runs to 861 residues: Alpha-actinin A (861 aa).

Positions 1–239 are actin-binding; the sequence is MSEEPTPVSG…VMTYVAQYYH (239 aa). 2 Calponin-homology (CH) domains span residues 22-127 and 136-242; these read ITQK…LRFA and LSAK…HHFS. Spectrin repeat units lie at residues 240–365, 366–480, 481–601, and 602–714; these read HFSA…ALEK, AEQE…TGVK, SSAE…EERK, and VQLA…EQVV. 2 consecutive EF-hand domains span residues 729–764 and 765–800; these read EELS…IGDE and LTEE…SRKG. 10 residues coordinate Ca(2+): Asp742, Asp744, Asp746, Lys748, Glu753, Asp778, Asp780, Asn782, Thr784, and Glu789.

It belongs to the alpha-actinin family. As to quaternary structure, homodimer; antiparallel.

It is found in the cytoplasm. The protein resides in the cell cortex. The protein localises to the contractile vacuole. Its subcellular location is the cytoplasmic vesicle. It localises to the phagosome. In terms of biological role, F-actin cross-linking protein which is thought to anchor actin to a variety of intracellular structures. This is a bundling protein. Increases the actin-stimulated ATPase activity of myosin. Involved in vegetative cell growth, phagocytosis, motility and development, probably through stabilization of the actin network in the cortical cytoskeleton. This chain is Alpha-actinin A (abpA), found in Dictyostelium discoideum (Social amoeba).